Here is a 105-residue protein sequence, read N- to C-terminus: Tyrosine-protein phosphatase 12 (105 aa).

Residues tryptophan 1 to phenylalanine 105 enclose the Tyrosine-protein phosphatase domain. Aspartate 84 is a substrate binding site.

This sequence belongs to the protein-tyrosine phosphatase family.

It carries out the reaction O-phospho-L-tyrosyl-[protein] + H2O = L-tyrosyl-[protein] + phosphate. This Styela plicata (Wrinkled sea squirt) protein is Tyrosine-protein phosphatase 12 (STY-12).